Consider the following 557-residue polypeptide: CCR4-NOT transcription complex subunit 6 (557 aa).

LRR repeat units follow at residues 52-73, 75-96, 98-120, and 121-143; these read HLTA…IAKL, NLVY…LGNM, SLRE…GKLF, and QLQT…CLEP. Residues 153–557 form a nuclease domain region; it reads LLDNLSGTAK…VNGIHLPGRR (405 aa). Glu-240 lines the Mg(2+) pocket. Substrate is bound by residues Glu-240, Glu-276, His-361, and Pro-366. Asp-412 contributes to the Mg(2+) binding site. Residue Asp-412 is the Proton donor/acceptor of the active site. The substrate site is built by Asn-414, Asn-481, and Phe-486.

It belongs to the CCR4/nocturin family. Component of the CCR4-NOT complex; distinct complexes seem to exist that differ in the participation of probably mutually exclusive catalytic subunits; the complex contains two deadenylase subunits, CNOT6 or CNOT6L, and CNOT7 or CNOT8. Interacts with CNOT7 and CNOT8. Interacts with UNR. Interacts with ZFP36L1 (via N-terminus). Interacts with ZNF335. Mg(2+) is required as a cofactor.

The protein localises to the cytoplasm. It localises to the nucleus. The enzyme catalyses Exonucleolytic cleavage of poly(A) to 5'-AMP.. Poly(A) nuclease with 3'-5' RNase activity. Catalytic component of the CCR4-NOT complex which is one of the major cellular mRNA deadenylases and is linked to various cellular processes including bulk mRNA degradation, miRNA-mediated repression, translational repression during translational initiation and general transcription regulation. Additional complex functions may be a consequence of its influence on mRNA expression. Involved in mRNA decay mediated by the major-protein-coding determinant of instability (mCRD) of the FOS gene in the cytoplasm. In the presence of ZNF335, enhances ligand-dependent transcriptional activity of nuclear hormone receptors. Mediates cell proliferation and cell survival and prevents cellular senescence. This chain is CCR4-NOT transcription complex subunit 6 (Cnot6), found in Mus musculus (Mouse).